We begin with the raw amino-acid sequence, 556 residues long: Formate--tetrahydrofolate ligase (556 aa).

Position 65 to 72 (65 to 72 (TPAGEGKS)) interacts with ATP.

This sequence belongs to the formate--tetrahydrofolate ligase family.

The catalysed reaction is (6S)-5,6,7,8-tetrahydrofolate + formate + ATP = (6R)-10-formyltetrahydrofolate + ADP + phosphate. The protein operates within one-carbon metabolism; tetrahydrofolate interconversion. In Streptococcus equi subsp. zooepidemicus (strain H70), this protein is Formate--tetrahydrofolate ligase.